A 905-amino-acid polypeptide reads, in one-letter code: Protein translocase subunit SecA (905 aa).

Residues glutamine 87, 105–109 (GEGKT), and aspartate 512 contribute to the ATP site. Residues 836 to 905 (DVDAVDEQRK…KKYKHCHGKL (70 aa)) are disordered. A compositionally biased stretch (basic and acidic residues) spans 841–858 (DEQRKAADSAPREFRHEQ). Zn(2+) contacts are provided by cysteine 890, cysteine 892, cysteine 901, and histidine 902. Basic residues predominate over residues 896 to 905 (KKYKHCHGKL).

The protein belongs to the SecA family. Monomer and homodimer. Part of the essential Sec protein translocation apparatus which comprises SecA, SecYEG and auxiliary proteins SecDF-YajC and YidC. Requires Zn(2+) as cofactor.

The protein localises to the cell inner membrane. It localises to the cytoplasm. It carries out the reaction ATP + H2O + cellular proteinSide 1 = ADP + phosphate + cellular proteinSide 2.. Part of the Sec protein translocase complex. Interacts with the SecYEG preprotein conducting channel. Has a central role in coupling the hydrolysis of ATP to the transfer of proteins into and across the cell membrane, serving both as a receptor for the preprotein-SecB complex and as an ATP-driven molecular motor driving the stepwise translocation of polypeptide chains across the membrane. In Idiomarina loihiensis (strain ATCC BAA-735 / DSM 15497 / L2-TR), this protein is Protein translocase subunit SecA.